Here is an 83-residue protein sequence, read N- to C-terminus: Large ribosomal subunit protein bL27 (83 aa).

The tract at residues 1–21 (MAHKRSSGAGRNGRDSNPKYL) is disordered.

Belongs to the bacterial ribosomal protein bL27 family.

The polypeptide is Large ribosomal subunit protein bL27 (Kosmotoga olearia (strain ATCC BAA-1733 / DSM 21960 / TBF 19.5.1)).